Here is a 474-residue protein sequence, read N- to C-terminus: ATP synthase subunit beta (474 aa).

153 to 160 (GGAGVGKT) contributes to the ATP binding site.

This sequence belongs to the ATPase alpha/beta chains family. As to quaternary structure, F-type ATPases have 2 components, CF(1) - the catalytic core - and CF(0) - the membrane proton channel. CF(1) has five subunits: alpha(3), beta(3), gamma(1), delta(1), epsilon(1). CF(0) has three main subunits: a(1), b(2) and c(9-12). The alpha and beta chains form an alternating ring which encloses part of the gamma chain. CF(1) is attached to CF(0) by a central stalk formed by the gamma and epsilon chains, while a peripheral stalk is formed by the delta and b chains.

It localises to the cell inner membrane. It carries out the reaction ATP + H2O + 4 H(+)(in) = ADP + phosphate + 5 H(+)(out). In terms of biological role, produces ATP from ADP in the presence of a proton gradient across the membrane. The catalytic sites are hosted primarily by the beta subunits. The sequence is that of ATP synthase subunit beta from Rickettsia typhi (strain ATCC VR-144 / Wilmington).